Consider the following 366-residue polypeptide: Ferredoxin--NADP reductase (366 aa).

FAD contacts are provided by Asp51, Gln59, Tyr64, Val104, Phe139, Asp308, and Thr349.

This sequence belongs to the ferredoxin--NADP reductase type 2 family. As to quaternary structure, homodimer. FAD is required as a cofactor.

The enzyme catalyses 2 reduced [2Fe-2S]-[ferredoxin] + NADP(+) + H(+) = 2 oxidized [2Fe-2S]-[ferredoxin] + NADPH. The polypeptide is Ferredoxin--NADP reductase (Methylibium petroleiphilum (strain ATCC BAA-1232 / LMG 22953 / PM1)).